The following is a 184-amino-acid chain: Rhox homeobox family member 1 (184 aa).

The segment at 26–104 (QLGAASSAEG…GPQPENMQPR (79 aa)) is disordered. Positions 88–99 (PAQAAMEGPQPE) are enriched in low complexity. The homeobox DNA-binding region spans 103 to 162 (PRTRRTKFTLLQVEELESVFRHTQYPDVPTRRELAENLGVTEDKVRVWFKNKRARCRRHQ). The Nuclear localization signal motif lies at 155 to 164 (RARCRRHQRE).

The protein belongs to the paired-like homeobox family. PEPP subfamily. Does not interact with itself. Ovary, testis and epididymis. Also detected in the prostate and the mammary gland. Expressed in many tumor cell lines derived from acute lymphocytic leukemia, prostate, endometrial adenocarcinoma, melanoma, bladder carcinoma, colon carcinoma, erythroleukemia and breast carcinoma. Not expressed in placenta. In testis, mainly expressed in germ cells, but also detected in somatic cells such as Sertoli cells, Leydig cells and peritubular cells.

It is found in the nucleus. Functionally, transcription factor maybe involved in reproductive processes. Modulates expression of target genes encoding proteins involved in processes relevant to spermatogenesis. The chain is Rhox homeobox family member 1 from Homo sapiens (Human).